Consider the following 908-residue polypeptide: Chloride channel protein 2 (908 aa).

The Cytoplasmic portion of the chain corresponds to 1 to 95 (MAAATAAAAA…RCHKFLVSRV (95 aa)). Residues 24–42 (QYEQTLMYGRYTQELGAFA) are essential for channel gating by both voltage and cell volume. Residue threonine 28 is modified to Phosphothreonine. Residues 44 to 57 (EEAARIRLGGPEPW) form a modulates channel gating by both voltage and cell volume region. 2 consecutive transmembrane segments (helical) span residues 96–129 (GEDWIFLVLLGLLMALVSWAMDYAIAVCLQAQQW) and 138–163 (ILLQYLAWVTYPVVLITFSAGFTQIL). A Selectivity filter part_1 motif is present at residues 169–173 (GSGIP). Serine 170 serves as a coordination point for chloride. The helical intramembrane region spans 172-179 (IPEMKTIL). Helical transmembrane passes span 188–206 (LTLKTFVAKVIGLTCALGS) and 213–231 (EGPFVHIASMCAALLSKFL). Positions 211 to 215 (GKEGP) match the Selectivity filter part_2 motif. 2 intramembrane regions (helical) span residues 247 to 259 (MLAAACAVGVGCC) and 263 to 271 (PIGGVLFSI). The next 5 membrane-spanning stretches (helical) occupy residues 283 to 303 (YWRGFFAATFSAFIFRVLAVW), 329 to 357 (LPAFAVIGIASGFGGALFVYLNRKIVQVM), 366 to 385 (FLMRKRLLFPALVTLLISTL), 437 to 457 (ANVFLTLVIFILMKFWMSALA), and 465 to 488 (GAFMPVFVIGAAFGRLVGESMAAW). Positions 465–469 (GAFMP) match the Selectivity filter part_3 motif. Phenylalanine 467 provides a ligand contact to chloride. An intramembrane region (helical) is located at residues 505 to 519 (GGYAVVGAAALAGAV). An intramembrane region (note=Loop between two helices) is located at residues 520–521 (TH). Residues 522-533 (TVSTAVIVFELT) constitute an intramembrane region (helical). An intramembrane region (note=Loop between two helices) is located at residues 534 to 538 (GQIAH). Residues 539–556 (ILPVMIAVILANAVAQSL) form a helical membrane-spanning segment. Residues 557–908 (QPSLYDSIIR…TPSDSDDKCQ (352 aa)) are Cytoplasmic-facing. Residue tyrosine 561 coordinates chloride. Residues 592 to 650 (MVRDVPHVALSCTFRDLRLALHRTKGRMLALVESPESMILLGSIERSQVVALLGAQLSP) enclose the CBS 1 domain. Residues 653-662 (RRQHMQKLRK) show a composition bias toward basic residues. Residues 653–722 (RRQHMQKLRK…NSTSLQEGTT (70 aa)) form a disordered region. Positions 666-680 (SPPSDQESPPSSETS) are enriched in low complexity. Residues 681 to 690 (IRFQVNTEDS) show a composition bias toward polar residues. The span at 698–707 (QTHKPLKPAL) shows a compositional bias: basic residues. The span at 711–722 (PSNSTSLQEGTT) shows a compositional bias: polar residues. The residue at position 768 (serine 768) is a Phosphoserine. Positions 800–860 (IDPAPFQLVE…GSVTAQGVKV (61 aa)) constitute a CBS 2 domain. The Basolateral membrane sorting motif lies at 822–823 (LL). The segment at 866 to 908 (SFRDSATSSSDTETTEVHALWGPRSRHGLPREGTPSDSDDKCQ) is disordered.

This sequence belongs to the chloride channel (TC 2.A.49) family. ClC-2/CLCN2 subfamily. In terms of assembly, homodimer. Interacts with auxiliary subunit HEPACAM. In terms of processing, phosphorylated. Activated by dephosphorylation. Expressed in the adrenal gland and brain. Expressed in intestinal epithelium (at protein level). Expressed in salivary gland (at protein level).

Its subcellular location is the cell membrane. It is found in the myelin membrane. It localises to the basolateral cell membrane. The protein localises to the cell projection. The protein resides in the dendritic spine membrane. Its subcellular location is the axon. The catalysed reaction is chloride(in) = chloride(out). It catalyses the reaction thiocyanate(in) = thiocyanate(out). It carries out the reaction bromide(in) = bromide(out). The enzyme catalyses nitrate(in) = nitrate(out). The catalysed reaction is iodide(out) = iodide(in). With respect to regulation, common gate kinetics are down-regulated by intracellular ATP. Inhibited by AK-42, a derivative of meclofenamate. Inhibited by Cd(2+). Inhibited by Zn(2+) and PKC activation. Inhibited at acidic pH. CCLN2:HEPACAM channel conductance is up-regulated upon hypo-osmolarity. Voltage-gated and osmosensitive chloride channel. Forms a homodimeric channel where each subunit has its own ion conduction pathway. Conducts double-barreled currents controlled by two types of gates, two fast glutamate gates that control each subunit independently and a slow common gate that opens and shuts off both subunits simultaneously. Displays inward rectification currents activated upon membrane hyperpolarization and extracellular hypotonicity. Contributes to chloride conductance involved in neuron excitability. In hippocampal neurons, generates a significant part of resting membrane conductance and provides an additional chloride efflux pathway to prevent chloride accumulation in dendrites upon GABA receptor activation. In glia, associates with the auxiliary subunit HEPACAM/GlialCAM at astrocytic processes and myelinated fiber tracts where it may regulate transcellular chloride flux buffering extracellular chloride and potassium concentrations. Regulates aldosterone production in adrenal glands. The opening of CLCN2 channels at hyperpolarized membrane potentials in the glomerulosa causes cell membrane depolarization, activation of voltage-gated calcium channels and increased expression of aldosterone synthase, the rate-limiting enzyme for aldosterone biosynthesis. Contributes to chloride conductance in retinal pigment epithelium involved in phagocytosis of shed photoreceptor outer segments and photoreceptor renewal. Conducts chloride currents at the basolateral membrane of epithelial cells with a role in chloride reabsorption rather than secretion. Permeable to small monovalent anions with chloride &gt; thiocyanate &gt; bromide &gt; nitrate &gt; iodide ion selectivity. The protein is Chloride channel protein 2 (Clcn2) of Mus musculus (Mouse).